A 446-amino-acid chain; its full sequence is Iron-sulfur cluster assembly SufBD family protein PH1385 (446 aa).

It belongs to the iron-sulfur cluster assembly SufBD family.

The protein is Iron-sulfur cluster assembly SufBD family protein PH1385 of Pyrococcus horikoshii (strain ATCC 700860 / DSM 12428 / JCM 9974 / NBRC 100139 / OT-3).